A 119-amino-acid polypeptide reads, in one-letter code: Large ribosomal subunit protein uL22 (119 aa).

This sequence belongs to the universal ribosomal protein uL22 family. As to quaternary structure, part of the 50S ribosomal subunit.

This protein binds specifically to 23S rRNA; its binding is stimulated by other ribosomal proteins, e.g. L4, L17, and L20. It is important during the early stages of 50S assembly. It makes multiple contacts with different domains of the 23S rRNA in the assembled 50S subunit and ribosome. In terms of biological role, the globular domain of the protein is located near the polypeptide exit tunnel on the outside of the subunit, while an extended beta-hairpin is found that lines the wall of the exit tunnel in the center of the 70S ribosome. The protein is Large ribosomal subunit protein uL22 of Rickettsia rickettsii (strain Iowa).